Consider the following 62-residue polypeptide: Large ribosomal subunit protein bL28 (62 aa).

The tract at residues 1–28 (MARKCVITGRKSRSGNSRSHAMNASKRT) is disordered. Polar residues predominate over residues 14–26 (SGNSRSHAMNASK).

It belongs to the bacterial ribosomal protein bL28 family.

This Bacillus licheniformis (strain ATCC 14580 / DSM 13 / JCM 2505 / CCUG 7422 / NBRC 12200 / NCIMB 9375 / NCTC 10341 / NRRL NRS-1264 / Gibson 46) protein is Large ribosomal subunit protein bL28.